The sequence spans 418 residues: Secreted beta-glucosidase SUN41 (418 aa).

The first 23 residues, 1–23 (MRFSQATVLAFAALSLAAPAFEA), serve as a signal peptide directing secretion. The segment covering 81–97 (SEETSSTSTSISSTTTI) has biased composition (low complexity). The disordered stretch occupies residues 81-150 (SEETSSTSTS…SGSTNGIEGD (70 aa)). The N-linked (GlcNAc...) asparagine glycan is linked to Asn100. The segment covering 112-126 (SLPSGTIKPSSFATE) has biased composition (polar residues). A compositionally biased stretch (low complexity) spans 127-136 (SQSQSQSSST).

The protein belongs to the SUN family. In terms of processing, predicted to be a substrate for cleavage by KEX2.

The protein localises to the secreted. The protein resides in the cell wall. Functionally, cell surface beta-glucosidase involved in cytokinesis, cell wall biogenesis, adhesion to host tissue, and biofilm formation; thus playing an important role in the host-pathogen interaction. Has hydrolytic activity on linear (1-&gt;3)-beta-D-glucans such as laminaribiose and other laminarioligosaccharides. This chain is Secreted beta-glucosidase SUN41, found in Candida albicans (strain SC5314 / ATCC MYA-2876) (Yeast).